The primary structure comprises 104 residues: L-rhamnose mutarotase (104 aa).

Tyrosine 18 contributes to the substrate binding site. Histidine 22 serves as the catalytic Proton donor. Residues tyrosine 41 and 76 to 77 (WW) each bind substrate.

Belongs to the rhamnose mutarotase family. Homodimer.

The protein resides in the cytoplasm. The catalysed reaction is alpha-L-rhamnose = beta-L-rhamnose. The protein operates within carbohydrate metabolism; L-rhamnose metabolism. Involved in the anomeric conversion of L-rhamnose. In Pectobacterium carotovorum subsp. carotovorum (strain PC1), this protein is L-rhamnose mutarotase.